The chain runs to 102 residues: Exocrine gland-secreted peptide 1 (102 aa).

A signal peptide spans 1–22; sequence MTSLPVLLFLIILLLPSMITEG. Cys-63 and Cys-95 are joined by a disulfide.

It belongs to the exocrine gland-secreted peptide family. Monomer. Expressed in the extraorbital lacrimal gland from where it is secreted into tears.

The protein resides in the secreted. In terms of biological role, male-specific phermone which is recognized by the Vmn2r116/V2rp5 receptor in the vomeronasal organ (VNO) and enhances female sexual receptive behavior (lordosis) upon male mounting, resulting in successful copulation. The sequence is that of Exocrine gland-secreted peptide 1 from Mus musculus (Mouse).